Here is a 396-residue protein sequence, read N- to C-terminus: tRNA (guanine-N(7)-)-methyltransferase non-catalytic subunit wuho (396 aa).

WD repeat units follow at residues 75 to 115, 162 to 201, 205 to 243, and 302 to 342; these read KVEV…AQLL, GHLS…DIHS, GHKE…ELLL, and AGTW…RASG.

Belongs to the WD repeat TRM82 family. Forms a heterodimer with the catalytic subunit Mettl1. Interacts with mei-P26 and weakly interacts with bgcn; required for the function or formation of the mei-P26-bgcn-bam-sxl complex. Interacts with nanos; may be involved in mei-P26-dependent derepression of the BMP signaling pathway. Interacts with Myc; the interaction may be mediated by mei-P26 and may be involved in the regulation of ribosome biogenesis. In testis, it is present at high level in hub cells, a niche for germline stem cells of testis. Ubiquitously expressed in all testicular cells throughout spermatogenesis. Ubiquitously expressed in all germline and somatic cells of the ovary.

The protein localises to the nucleus. The protein resides in the cytoplasm. It participates in tRNA modification; N(7)-methylguanine-tRNA biosynthesis. In terms of biological role, required for the Mettl1-dependent formation of N(7)-methylguanine at position 46 (m7G46) in tRNA. In the Mettl1-wuho methyltransferase complex, it is required to stabilize and induce conformational changes of the catalytic subunit. Required for binding of nanos mRNA and repression of translation by the mei-P26-bgcn-bam-sxl complex. May cooperate with mei-P26 and nanos to derepress the BMP signaling pathway. May cooperate with mei-P26 to suppress expression of a subset of microRNAs. May cooperate with mei-P26 to regulate bam expression levels in germline cells during gametogenesis. Required to promote mitosis to meiosis transition during gametogenesis. May regulate germline cell division in part by regulating ribosome biogenesis. The sequence is that of tRNA (guanine-N(7)-)-methyltransferase non-catalytic subunit wuho from Drosophila pseudoobscura pseudoobscura (Fruit fly).